Here is a 32-residue protein sequence, read N- to C-terminus: Cruzioseptin-9 (32 aa).

Gln-29 carries the post-translational modification Glutamine amide. A propeptide spanning residues 31-32 (EQ) is cleaved from the precursor.

Expressed by the skin glands.

It localises to the secreted. Its function is as follows. Has antimicrobial activity. This is Cruzioseptin-9 from Cruziohyla calcarifer (Splendid leaf frog).